Reading from the N-terminus, the 1358-residue chain is DNA-directed RNA polymerase subunit beta (1358 aa).

Belongs to the RNA polymerase beta chain family. As to quaternary structure, the RNAP catalytic core consists of 2 alpha, 1 beta, 1 beta' and 1 omega subunit. When a sigma factor is associated with the core the holoenzyme is formed, which can initiate transcription.

The catalysed reaction is RNA(n) + a ribonucleoside 5'-triphosphate = RNA(n+1) + diphosphate. Functionally, DNA-dependent RNA polymerase catalyzes the transcription of DNA into RNA using the four ribonucleoside triphosphates as substrates. The sequence is that of DNA-directed RNA polymerase subunit beta from Francisella tularensis subsp. holarctica (strain LVS).